The following is a 203-amino-acid chain: ATP-dependent Clp protease proteolytic subunit (203 aa).

S100 serves as the catalytic Nucleophile. H125 is an active-site residue.

The protein belongs to the peptidase S14 family. As to quaternary structure, fourteen ClpP subunits assemble into 2 heptameric rings which stack back to back to give a disk-like structure with a central cavity, resembling the structure of eukaryotic proteasomes.

It localises to the cytoplasm. It carries out the reaction Hydrolysis of proteins to small peptides in the presence of ATP and magnesium. alpha-casein is the usual test substrate. In the absence of ATP, only oligopeptides shorter than five residues are hydrolyzed (such as succinyl-Leu-Tyr-|-NHMec, and Leu-Tyr-Leu-|-Tyr-Trp, in which cleavage of the -Tyr-|-Leu- and -Tyr-|-Trp bonds also occurs).. Cleaves peptides in various proteins in a process that requires ATP hydrolysis. Has a chymotrypsin-like activity. Plays a major role in the degradation of misfolded proteins. This is ATP-dependent Clp protease proteolytic subunit from Anaeromyxobacter dehalogenans (strain 2CP-1 / ATCC BAA-258).